Consider the following 38-residue polypeptide: Large ribosomal subunit protein bL36 (38 aa).

It belongs to the bacterial ribosomal protein bL36 family.

This chain is Large ribosomal subunit protein bL36, found in Roseiflexus sp. (strain RS-1).